Reading from the N-terminus, the 276-residue chain is Release factor glutamine methyltransferase (276 aa).

S-adenosyl-L-methionine contacts are provided by residues 116 to 120 (GTGTG), Asp-139, Trp-167, and Asn-182. 182–185 (NPPY) serves as a coordination point for substrate.

It belongs to the protein N5-glutamine methyltransferase family. PrmC subfamily.

It catalyses the reaction L-glutaminyl-[peptide chain release factor] + S-adenosyl-L-methionine = N(5)-methyl-L-glutaminyl-[peptide chain release factor] + S-adenosyl-L-homocysteine + H(+). In terms of biological role, methylates the class 1 translation termination release factors RF1/PrfA and RF2/PrfB on the glutamine residue of the universally conserved GGQ motif. The sequence is that of Release factor glutamine methyltransferase from Pseudomonas aeruginosa (strain ATCC 15692 / DSM 22644 / CIP 104116 / JCM 14847 / LMG 12228 / 1C / PRS 101 / PAO1).